Here is a 440-residue protein sequence, read N- to C-terminus: tRNA-2-methylthio-N(6)-dimethylallyladenosine synthase (440 aa).

The 117-residue stretch at 7–123 (NTFYIHTFGC…LPQLIEQARS (117 aa)) folds into the MTTase N-terminal domain. Residues C16, C52, C86, C159, C163, and C166 each coordinate [4Fe-4S] cluster. Residues 145 to 375 (RQGSISAFVP…IDLQNTISGE (231 aa)) enclose the Radical SAM core domain. A TRAM domain is found at 378-440 (QQAIGSVVEV…TSATLTGRPV (63 aa)).

Belongs to the methylthiotransferase family. MiaB subfamily. Monomer. [4Fe-4S] cluster is required as a cofactor.

It localises to the cytoplasm. It carries out the reaction N(6)-dimethylallyladenosine(37) in tRNA + (sulfur carrier)-SH + AH2 + 2 S-adenosyl-L-methionine = 2-methylsulfanyl-N(6)-dimethylallyladenosine(37) in tRNA + (sulfur carrier)-H + 5'-deoxyadenosine + L-methionine + A + S-adenosyl-L-homocysteine + 2 H(+). Its function is as follows. Catalyzes the methylthiolation of N6-(dimethylallyl)adenosine (i(6)A), leading to the formation of 2-methylthio-N6-(dimethylallyl)adenosine (ms(2)i(6)A) at position 37 in tRNAs that read codons beginning with uridine. The polypeptide is tRNA-2-methylthio-N(6)-dimethylallyladenosine synthase (Pelodictyon phaeoclathratiforme (strain DSM 5477 / BU-1)).